Reading from the N-terminus, the 159-residue chain is Small ribosomal subunit protein uS7c (159 aa).

Belongs to the universal ribosomal protein uS7 family. As to quaternary structure, part of the 30S ribosomal subunit.

It localises to the plastid. Its subcellular location is the chloroplast. Its function is as follows. One of the primary rRNA binding proteins, it binds directly to 16S rRNA where it nucleates assembly of the head domain of the 30S subunit. The sequence is that of Small ribosomal subunit protein uS7c (rps7) from Bigelowiella natans (Pedinomonas minutissima).